The sequence spans 796 residues: Kinesin-like protein KIF3C (796 aa).

One can recognise a Kinesin motor domain in the interval 10 to 367 (ALKVVARCRP…LRFANRAKNI (358 aa)). 97-104 (GQTGTGKT) contributes to the ATP binding site. Disordered stretches follow at residues 251-292 (ERQN…PKEA), 397-421 (EKKG…SAPA), and 754-796 (PSTS…VDHD). The segment covering 270–284 (AGGGGGGGGTSGSGS) has biased composition (gly residues). Positions 378–632 (KDTLLREFQE…NEQTRELKLK (255 aa)) form a coiled coil. The span at 401–416 (MLGKRPRRKSSRRKKA) shows a compositional bias: basic residues. The interval 633–793 (YLIIENFIPP…SAPLHPATVV (161 aa)) is globular.

Belongs to the TRAFAC class myosin-kinesin ATPase superfamily. Kinesin family. Kinesin II subfamily. Heterodimer of KIF3A and KIF3C.

It localises to the cytoplasm. The protein localises to the cytoskeleton. Its function is as follows. Microtubule-based anterograde translocator for membranous organelles. The polypeptide is Kinesin-like protein KIF3C (Kif3c) (Rattus norvegicus (Rat)).